Here is a 297-residue protein sequence, read N- to C-terminus: MKNKGKVIIISGPSGVGKGSVNGELLTNKDLKLEYSVSMTTRAPREGEVNGVNYFFVSKEEFANAIVNNELIEYANFVGNSYGTPRKYVEEKLNEGKNVILEIEVDGATQVLRNEENVLSIFLMPPTLNELESRIKGRATESDDKIKARLDKALLEIPLKHNYDYVVENDSVENAVSKITDILIREKCTESNEESKFKELVKIVENIVDQKYTYFINNWEANVKLLAHNKEAKKEANDFDARGELIKILSSEVYRKTLAHGDFSKINDVEYVDFKIQKLMFKINFFSIKQRSDFSGD.

Residues 5 to 184 (GKVIIISGPS…AVSKITDILI (180 aa)) form the Guanylate kinase-like domain. Position 12-19 (12-19 (GPSGVGKG)) interacts with ATP. Residues 205–297 (ENIVDQKYTY…IKQRSDFSGD (93 aa)) form a unknown region.

Belongs to the guanylate kinase family.

Its subcellular location is the cytoplasm. It carries out the reaction GMP + ATP = GDP + ADP. In terms of biological role, essential for recycling GMP and indirectly, cGMP. This Mesoplasma florum (strain ATCC 33453 / NBRC 100688 / NCTC 11704 / L1) (Acholeplasma florum) protein is Guanylate kinase (gmk).